The following is a 404-amino-acid chain: Serine/threonine transporter SstT (404 aa).

The next 9 membrane-spanning stretches (helical) occupy residues 17–37, 39–59, 75–95, 138–158, 179–199, 212–232, 287–307, 319–339, and 354–374; these read IGIG…VTAI, ILGQ…VFAL, MTLI…VAVI, ALAT…GLAL, IVVW…FSTV, LLIL…NPLL, IPLG…VLTL, FLTA…ASGV, and FGIS…VGVI.

This sequence belongs to the dicarboxylate/amino acid:cation symporter (DAACS) (TC 2.A.23) family.

It localises to the cell membrane. The enzyme catalyses L-serine(in) + Na(+)(in) = L-serine(out) + Na(+)(out). The catalysed reaction is L-threonine(in) + Na(+)(in) = L-threonine(out) + Na(+)(out). Its function is as follows. Involved in the import of serine and threonine into the cell, with the concomitant import of sodium (symport system). This is Serine/threonine transporter SstT from Streptococcus equi subsp. equi (strain 4047).